We begin with the raw amino-acid sequence, 170 residues long: UPF0220 protein C8D2.02c (170 aa).

4 consecutive transmembrane segments (helical) span residues 23–43, 54–74, 101–121, and 136–156; these read LGVY…VDAA, LHIT…IVIV, ILFI…TVFI, and MGSA…ALWI.

The protein belongs to the UPF0220 family.

Its subcellular location is the membrane. The chain is UPF0220 protein C8D2.02c from Schizosaccharomyces pombe (strain 972 / ATCC 24843) (Fission yeast).